Consider the following 416-residue polypeptide: MKAVGLVVEYNPFHNGHLYHIKEAKSETRSEVAVAVMSGSFLQRGEPAIVSKWARTKMALASFADVVVELPYIFAVQKAETFAEGAVSILNELGCSSLFFGSEHGDIEAFLNTAAHTIEHEDRLNEEARKQIAFGLSYPQAMAKAFRSVTREGGNIVDLSKPNNILGFHYVKAIMQKQLSMKPETVKRRSSGYHDSTFPEADRIASATSIRKSIFETGSLADSRFYLPKTTVDELDEYARTFGMWHSPEDYFPFLKYSLHTMDTEELKGIYEVEEGLEHRVKKAIRKAGSFKEYMELLKTKRYTWTRLQRMNTHILTKTKKADVKRMLNETHPAYIRLLGMTKKGQAYLAEKKKSLSAPLITKTGSFSHPSLQLDIKAGQVYSAPLKEPVRTMLTEQEYSLSPIRYDEDSRIFLRK.

ATP contacts are provided by residues 7-20, G101, N163, and R188; that span reads VVEY…HLYH.

Belongs to the TmcAL family.

The protein resides in the cytoplasm. The catalysed reaction is cytidine(34) in elongator tRNA(Met) + acetate + ATP = N(4)-acetylcytidine(34) in elongator tRNA(Met) + AMP + diphosphate. In terms of biological role, catalyzes the formation of N(4)-acetylcytidine (ac(4)C) at the wobble position of elongator tRNA(Met), using acetate and ATP as substrates. First activates an acetate ion to form acetyladenylate (Ac-AMP) and then transfers the acetyl group to tRNA to form ac(4)C34. This chain is tRNA(Met) cytidine acetate ligase, found in Bacillus licheniformis (strain ATCC 14580 / DSM 13 / JCM 2505 / CCUG 7422 / NBRC 12200 / NCIMB 9375 / NCTC 10341 / NRRL NRS-1264 / Gibson 46).